A 207-amino-acid chain; its full sequence is Uridine kinase (207 aa).

11–18 (GGSGSGKT) is a binding site for ATP.

The protein belongs to the uridine kinase family.

It localises to the cytoplasm. The enzyme catalyses uridine + ATP = UMP + ADP + H(+). The catalysed reaction is cytidine + ATP = CMP + ADP + H(+). It functions in the pathway pyrimidine metabolism; CTP biosynthesis via salvage pathway; CTP from cytidine: step 1/3. Its pathway is pyrimidine metabolism; UMP biosynthesis via salvage pathway; UMP from uridine: step 1/1. This chain is Uridine kinase, found in Staphylococcus aureus (strain Mu3 / ATCC 700698).